The sequence spans 1460 residues: Nucleoporin NUP159 (1460 aa).

The segment at 1–500 is interaction with DBP5; sequence MSSLKDEVPT…SEQDATDPAS (500 aa). One copy of the FG 1 repeat lies at 228-231; the sequence is AVFG. One copy of the PXFG 1 repeat lies at 267 to 270; that stretch reads PPFG. Residues 401 to 435 form a disordered region; sequence KSLSPTSEKIPIAGQEQEEKKKNNESSKALSENPF. Ser-404 carries the phosphoserine modification. The stretch at 462–470 is one SXFGXPXFG 1 repeat; that stretch reads STFGAPSFG. Residues 483-504 are disordered; the sequence is STSTGVASSEQDATDPASAKPV. The interactions with CRM1 and GLE1 stretch occupies residues 497-701; it reads DPASAKPVFG…KPNTSTKPKT (205 aa). An SXFGXPXFG 2; approximate repeat occupies 503–511; sequence PVFGKPAFG. An SXFGXPXFG 3; approximate repeat occupies 522–530; the sequence is YAFGKPSFG. The PXFG 2 repeat unit spans residues 532–535; sequence PSFG. Positions 533–619 are disordered; it reads SFGSGKSSVE…SAFGTASSNE (87 aa). Polar residues-rich tracts occupy residues 536–546, 556–567, 582–593, and 607–619; these read SGKSSVESPAS, GTPSFGSGNSSV, GTPSFGSGNSSA, and FGTSAFGTASSNE. Residues 548 to 556 form an SXFGXPXFG 4 repeat; it reads SAFGKPSFG. The PXFG 3 repeat unit spans residues 558–561; it reads PSFG. The SXFGXPXFG 5 repeat unit spans residues 574-582; it reads SAFGKPSFG. The PXFG 4 repeat unit spans residues 584–587; that stretch reads PSFG. The SXFGXPXFG 6 repeat unit spans residues 600-608; that stretch reads SAFGKPSFG. The stretch at 610–613 is one SXFG 1 repeat; sequence SAFG. Residues 624–632 form an SXFGXPXFG 7; approximate repeat; sequence SIFGKAAFG. One copy of the FG 2 repeat lies at 642–645; it reads ELFG. The tract at residues 647 to 704 is disordered; that stretch reads NFTISKPTVDSPKEVDSTSPFPSSGDQSEDESKSDVDSSSTPFGTKPNTSTKPKTNAF. Ser-657 bears the Phosphoserine mark. Residues 683–704 are compositionally biased toward low complexity; sequence DSSSTPFGTKPNTSTKPKTNAF. The stretch at 687-690 is one FG 3 repeat; it reads TPFG. The FXFG 1 repeat unit spans residues 704 to 707; the sequence is FDFG. An SXFG 2 repeat occupies 709–712; sequence SSFG. Ser-724 is subject to Phosphoserine. 3 stretches are compositionally biased toward polar residues: residues 727–750, 757–767, and 778–800; these read TFKFGTQASPFSSQLGNKSPFSSF, NGSLSKGSTSE, and NGPNVSGNDLTDSTVEQTSSTRL. Residues 727 to 824 form a disordered region; it reads TFKFGTQASP…EAQKSPIGKL (98 aa). One copy of the FXFG 2 repeat lies at 728-731; sequence FKFG. Phosphoserine is present on residues Ser-735 and Ser-745. Thr-803 carries the phosphothreonine modification. Residues 804–814 show a composition bias toward acidic residues; it reads PSDEDGEVVEE. Phosphoserine is present on residues Ser-805 and Ser-819. One copy of the PXFG 5 repeat lies at 842-845; it reads PVFG. The span at 861–889 shows a compositional bias: polar residues; sequence TNITKPSSTTPAFSFGNSTMNKSNTSTVS. Residues 861-1092 form a disordered region; sequence TNITKPSSTT…DINTDELPHG (232 aa). Residues 873-876 form an FXFG 3 repeat; sequence FSFG. Phosphoserine is present on Ser-889. A compositionally biased stretch (basic and acidic residues) spans 917–936; it reads AKEERTGESSKKDHNDDPKD. At Ser-940 the chain carries Phosphoserine. Polar residues predominate over residues 942–958; that stretch reads SEISVRTSESAFDTTAN. Composition is skewed to basic and acidic residues over residues 960–1002, 1017–1027, 1035–1061, and 1068–1092; these read EIPK…KNNE, ALKKDNEKENF, QFEDHQSSEEDASEKDSRQSSEVKESD, and SDRDESISESYDKLEDINTDELPHG. An interaction with DYN2 region spans residues 1086–1175; that stretch reads TDELPHGGEA…TCNFSVQTFE (90 aa). The tract at residues 1223 to 1460 is interaction with NUP82; it reads AEFTVLMENI…DFFKNLNMAK (238 aa). Coiled-coil stretches lie at residues 1279–1320 and 1383–1418; these read EQMQ…YLFL and AKLAKESLARDGLLKEIKLLREQVSRLQLEEKGKKA.

In terms of assembly, component of the nuclear pore complex (NPC). NPC constitutes the exclusive means of nucleocytoplasmic transport. NPCs allow the passive diffusion of ions and small molecules and the active, nuclear transport receptor-mediated bidirectional transport of macromolecules such as proteins, RNAs, ribonucleoparticles (RNPs), and ribosomal subunits across the nuclear envelope. Due to its 8-fold rotational symmetry, all subunits are present with 8 copies or multiples thereof. Part of the NUP82 subcomplex, interacts with NUP82 through its C-terminal coiled coil. This subcomplex is the base for interactions with NUP116 and GLE2, with NUP42 and GLE1 and with DYN2. Interacts directly with DYN2. Interacts through its FG repeats with karyopherins, such as heterodimeric mRNA transport factor MEX67/MTR2, CRM1 (XPO1), and PSE1 (GSP1-GDP dependent). Interaction with CRM1 (XPO1) is GSP1-GTP dependent and stimulated by RNA1. NUP159 also interacts with GLE1 and the ATP-dependent RNA helicase DBP5.

The protein localises to the nucleus. It is found in the nuclear pore complex. It localises to the nucleus membrane. Its function is as follows. Functions as a component of the nuclear pore complex (NPC). NPC components, collectively referred to as nucleoporins (NUPs), can play the role of both NPC structural components and of docking or interaction partners for transiently associated nuclear transport factors. Active directional transport is assured by both, a Phe-Gly (FG) repeat affinity gradient for these transport factors across the NPC and a transport cofactor concentration gradient across the nuclear envelope (GSP1 and GSP2 GTPases associated predominantly with GTP in the nucleus, with GDP in the cytoplasm). NUP159 plays an important role in several nuclear export pathways including poly(A)+ RNA, pre-ribosome, and protein export. This is Nucleoporin NUP159 (NUP159) from Saccharomyces cerevisiae (strain ATCC 204508 / S288c) (Baker's yeast).